Here is an 86-residue protein sequence, read N- to C-terminus: uncharacterized protein (86 aa).

Residues 4 to 24 (LFFTLIAFVAIILLMSIGFII) traverse the membrane as a helical segment.

Its subcellular location is the membrane. This is an uncharacterized protein from Haemophilus influenzae (strain ATCC 51907 / DSM 11121 / KW20 / Rd).